We begin with the raw amino-acid sequence, 320 residues long: Apolipoprotein E (320 aa).

The signal sequence occupies residues 1–18 (MKVLWAAFLVAFLAGCQG). 8 tandem repeats follow at residues 82 to 103 (ALMD…EQLS), 104 to 125 (PVAE…ARLG), 126 to 147 (ADME…AMLG), 148 to 169 (QSTD…KRLL), 170 to 191 (RDVD…EGAE), 192 to 213 (RGVS…ARAA), 214 to 236 (TVGS…ERLR), and 237 to 258 (ARME…EQVE). Positions 82–199 (ALMDETMKEL…AERGVSAIRE (118 aa)) are 8 X 22 AA approximate tandem repeats. Met145 is subject to Methionine sulfoxide. Ser149 carries the phosphoserine modification. The interval 160–170 (HLRKLRKRLLR) is LDL and other lipoprotein receptors binding. 164 to 167 (LRKR) contacts heparin. Residues 212–293 (AATVGSSLAS…SWFEPLVEDM (82 aa)) form a lipid-binding and lipoprotein association region. Heparin is bound at residue 232–239 (GERLRARM). Positions 269–320 (QQMRLQAEAFQARLKSWFEPLVEDMQRQWAGLVEKVQAAVGASATPVPSDNH) are homooligomerization. A specificity for association with VLDL region spans residues 281–293 (RLKSWFEPLVEDM).

This sequence belongs to the apolipoprotein A1/A4/E family. As to quaternary structure, homotetramer. May interact with ABCA1; functionally associated with ABCA1 in the biogenesis of HDLs. May interact with APP/A4 amyloid-beta peptide; the interaction is extremely stable in vitro but its physiological significance is unclear. May interact with MAPT. May interact with MAP2. In the cerebrospinal fluid, interacts with secreted SORL1. Interacts with PMEL; this allows the loading of PMEL luminal fragment on ILVs to induce fibril nucleation. Post-translationally, APOE exists as multiple glycosylated and sialylated glycoforms within cells and in plasma. The extent of glycosylation and sialylation are tissue and context specific. In terms of processing, glycated in plasma VLDL. Phosphorylated by FAM20C in the extracellular medium.

Its subcellular location is the secreted. It is found in the extracellular space. The protein resides in the extracellular matrix. It localises to the extracellular vesicle. The protein localises to the endosome. Its subcellular location is the multivesicular body. Its function is as follows. APOE is an apolipoprotein, a protein associating with lipid particles, that mainly functions in lipoprotein-mediated lipid transport between organs via the plasma and interstitial fluids. APOE is a core component of plasma lipoproteins and is involved in their production, conversion and clearance. Apolipoproteins are amphipathic molecules that interact both with lipids of the lipoprotein particle core and the aqueous environment of the plasma. As such, APOE associates with chylomicrons, chylomicron remnants, very low density lipoproteins (VLDL) and intermediate density lipoproteins (IDL) but shows a preferential binding to high-density lipoproteins (HDL). It also binds a wide range of cellular receptors including the LDL receptor/LDLR, the LDL receptor-related proteins LRP1, LRP2 and LRP8 and the very low-density lipoprotein receptor/VLDLR that mediate the cellular uptake of the APOE-containing lipoprotein particles. Finally, APOE also has a heparin-binding activity and binds heparan-sulfate proteoglycans on the surface of cells, a property that supports the capture and the receptor-mediated uptake of APOE-containing lipoproteins by cells. A main function of APOE is to mediate lipoprotein clearance through the uptake of chylomicrons, VLDLs, and HDLs by hepatocytes. APOE is also involved in the biosynthesis by the liver of VLDLs as well as their uptake by peripheral tissues ensuring the delivery of triglycerides and energy storage in muscle, heart and adipose tissues. By participating in the lipoprotein-mediated distribution of lipids among tissues, APOE plays a critical role in plasma and tissues lipid homeostasis. APOE is also involved in two steps of reverse cholesterol transport, the HDLs-mediated transport of cholesterol from peripheral tissues to the liver, and thereby plays an important role in cholesterol homeostasis. First, it is functionally associated with ABCA1 in the biogenesis of HDLs in tissues. Second, it is enriched in circulating HDLs and mediates their uptake by hepatocytes. APOE also plays an important role in lipid transport in the central nervous system, regulating neuron survival and sprouting. The sequence is that of Apolipoprotein E (APOE) from Saimiri boliviensis boliviensis (Bolivian squirrel monkey).